Here is a 63-residue protein sequence, read N- to C-terminus: Large ribosomal subunit protein bL35 (63 aa).

Positions 1-22 are disordered; the sequence is MPKMKTKSGATKRFKKTATGFK.

This sequence belongs to the bacterial ribosomal protein bL35 family.

The polypeptide is Large ribosomal subunit protein bL35 (Marinobacter nauticus (strain ATCC 700491 / DSM 11845 / VT8) (Marinobacter aquaeolei)).